Reading from the N-terminus, the 145-residue chain is D-aminoacyl-tRNA deacylase (145 aa).

Residues 137–138 (GP) carry the Gly-cisPro motif, important for rejection of L-amino acids motif.

It belongs to the DTD family. As to quaternary structure, homodimer.

The protein resides in the cytoplasm. It catalyses the reaction glycyl-tRNA(Ala) + H2O = tRNA(Ala) + glycine + H(+). It carries out the reaction a D-aminoacyl-tRNA + H2O = a tRNA + a D-alpha-amino acid + H(+). Functionally, an aminoacyl-tRNA editing enzyme that deacylates mischarged D-aminoacyl-tRNAs. Also deacylates mischarged glycyl-tRNA(Ala), protecting cells against glycine mischarging by AlaRS. Acts via tRNA-based rather than protein-based catalysis; rejects L-amino acids rather than detecting D-amino acids in the active site. By recycling D-aminoacyl-tRNA to D-amino acids and free tRNA molecules, this enzyme counteracts the toxicity associated with the formation of D-aminoacyl-tRNA entities in vivo and helps enforce protein L-homochirality. The chain is D-aminoacyl-tRNA deacylase from Limosilactobacillus reuteri (strain DSM 20016) (Lactobacillus reuteri).